The primary structure comprises 408 residues: Glutamate N-acetyltransferase (408 aa).

6 residues coordinate substrate: Thr150, Lys176, Thr189, Glu271, Asn403, and Thr408. Catalysis depends on Thr189, which acts as the Nucleophile.

The protein belongs to the ArgJ family. As to quaternary structure, heterotetramer of two alpha and two beta chains.

It is found in the cytoplasm. The enzyme catalyses N(2)-acetyl-L-ornithine + L-glutamate = N-acetyl-L-glutamate + L-ornithine. It participates in amino-acid biosynthesis; L-arginine biosynthesis; L-ornithine and N-acetyl-L-glutamate from L-glutamate and N(2)-acetyl-L-ornithine (cyclic): step 1/1. Functionally, catalyzes the transfer of the acetyl group from N(2)-acetylornithine to glutamate, forming N-acetylglutamate and L-ornithine. In Methanococcus maripaludis (strain C7 / ATCC BAA-1331), this protein is Glutamate N-acetyltransferase.